The following is a 158-amino-acid chain: Regulator of sigma D (158 aa).

It belongs to the Rsd/AlgQ family. As to quaternary structure, interacts with RpoD.

It localises to the cytoplasm. In terms of biological role, binds RpoD and negatively regulates RpoD-mediated transcription activation by preventing the interaction between the primary sigma factor RpoD with the catalytic core of the RNA polymerase and with promoter DNA. May be involved in replacement of the RNA polymerase sigma subunit from RpoD to RpoS during the transition from exponential growth to the stationary phase. This Shigella boydii serotype 4 (strain Sb227) protein is Regulator of sigma D.